A 208-amino-acid polypeptide reads, in one-letter code: Histone H1t (208 aa).

Over residues 1-12 the composition is skewed to polar residues; it reads MSETAPAASSTL. Positions 1 to 39 are disordered; that stretch reads MSETAPAASSTLVPAPVEKPATKRRGKKPGMATARKPRG. Ser9 carries the phosphoserine modification. The 74-residue stretch at 38–111 folds into the H15 domain; the sequence is RGFSVSKLIP…GASGSFKLSK (74 aa). Arg56 carries the post-translational modification Citrulline. The interval 93-208 is disordered; it reads GVLVQTKGTG…TDLRKAAGRK (116 aa). Positions 121-134 are enriched in basic residues; sequence KGKKSASAKAKKLG. Position 141 is a phosphoserine (Ser141). Residues 143 to 154 show a composition bias toward basic residues; that stretch reads KSSKTKVVKKPK. Thr156 bears the Phosphothreonine mark. Phosphoserine occurs at positions 163, 178, and 187. Over residues 199 to 208 the composition is skewed to basic and acidic residues; sequence TDLRKAAGRK.

It belongs to the histone H1/H5 family. Phosphorylated in early spermatids. Post-translationally, citrullination at Arg-56 (H1R54ci) by PADI4 takes place within the DNA-binding site of H1 and results in its displacement from chromatin and global chromatin decondensation, thereby promoting pluripotency and stem cell maintenance. As to expression, testis-specific. Expressed in pachytene spermatocytes during meiotic prophase I.

The protein resides in the nucleus. It localises to the chromosome. Its function is as follows. Testis-specific histone H1 that forms less compacted chromatin compared to other H1 histone subtypes. Formation of more relaxed chromatin may be required to promote chromatin architecture required for proper chromosome regulation during meiosis, such as homologous recombination. Histones H1 act as linkers that bind to nucleosomes and compact polynucleosomes into a higher-order chromatin configuration. The chain is Histone H1t from Rattus norvegicus (Rat).